The following is a 313-amino-acid chain: tRNA dimethylallyltransferase (313 aa).

11 to 18 (GPTAAGKS) is an ATP binding site. 13–18 (TAAGKS) provides a ligand contact to substrate. Interaction with substrate tRNA stretches follow at residues 36–39 (DSAT), 160–164 (QRIQR), and 244–249 (RCVGYR).

Belongs to the IPP transferase family. In terms of assembly, monomer. It depends on Mg(2+) as a cofactor.

It catalyses the reaction adenosine(37) in tRNA + dimethylallyl diphosphate = N(6)-dimethylallyladenosine(37) in tRNA + diphosphate. Catalyzes the transfer of a dimethylallyl group onto the adenine at position 37 in tRNAs that read codons beginning with uridine, leading to the formation of N6-(dimethylallyl)adenosine (i(6)A). The polypeptide is tRNA dimethylallyltransferase (Bordetella pertussis (strain Tohama I / ATCC BAA-589 / NCTC 13251)).